Reading from the N-terminus, the 447-residue chain is Tubulin beta chain (447 aa).

GTP-binding residues include Gln-11, Glu-69, Ser-138, Gly-142, Thr-143, Gly-144, Asn-204, and Asn-226. Glu-69 serves as a coordination point for Mg(2+). The tract at residues Tyr-425 to Glu-447 is disordered. Residues Glu-432–Glu-447 are compositionally biased toward acidic residues.

The protein belongs to the tubulin family. As to quaternary structure, dimer of alpha and beta chains. A typical microtubule is a hollow water-filled tube with an outer diameter of 25 nm and an inner diameter of 15 nM. Alpha-beta heterodimers associate head-to-tail to form protofilaments running lengthwise along the microtubule wall with the beta-tubulin subunit facing the microtubule plus end conferring a structural polarity. Microtubules usually have 13 protofilaments but different protofilament numbers can be found in some organisms and specialized cells. The cofactor is Mg(2+).

It localises to the cytoplasm. The protein localises to the cytoskeleton. In terms of biological role, tubulin is the major constituent of microtubules, a cylinder consisting of laterally associated linear protofilaments composed of alpha- and beta-tubulin heterodimers. Microtubules grow by the addition of GTP-tubulin dimers to the microtubule end, where a stabilizing cap forms. Below the cap, tubulin dimers are in GDP-bound state, owing to GTPase activity of alpha-tubulin. The polypeptide is Tubulin beta chain (tubA) (Botryotinia fuckeliana (Noble rot fungus)).